Consider the following 331-residue polypeptide: Beta-ketoacyl-[acyl-carrier-protein] synthase III (331 aa).

Residues C115 and H255 contribute to the active site. Residues 256–260 form an ACP-binding region; sequence QANFR. N285 is a catalytic residue.

This sequence belongs to the thiolase-like superfamily. FabH family. As to quaternary structure, homodimer.

The protein localises to the cytoplasm. It carries out the reaction malonyl-[ACP] + acetyl-CoA + H(+) = 3-oxobutanoyl-[ACP] + CO2 + CoA. The protein operates within lipid metabolism; fatty acid biosynthesis. Functionally, catalyzes the condensation reaction of fatty acid synthesis by the addition to an acyl acceptor of two carbons from malonyl-ACP. Catalyzes the first condensation reaction which initiates fatty acid synthesis and may therefore play a role in governing the total rate of fatty acid production. Possesses both acetoacetyl-ACP synthase and acetyl transacylase activities. Its substrate specificity determines the biosynthesis of branched-chain and/or straight-chain of fatty acids. The polypeptide is Beta-ketoacyl-[acyl-carrier-protein] synthase III (Helicobacter pylori (strain J99 / ATCC 700824) (Campylobacter pylori J99)).